The sequence spans 445 residues: Elongation factor 1-alpha (445 aa).

The 226-residue stretch at 5–230 (KVHISLVVIG…DNLEPPKRPS (226 aa)) folds into the tr-type G domain. A G1 region spans residues 14–21 (GHVDSGKS). Residue 14-21 (GHVDSGKS) participates in GTP binding. K55 carries the N6,N6-dimethyllysine modification. Residues 70 to 74 (CITID) form a G2 region. Residue K79 is modified to N6,N6,N6-trimethyllysine. The G3 stretch occupies residues 91–94 (DAPG). GTP contacts are provided by residues 91-95 (DAPGH) and 153-156 (NKFD). Residues 153 to 156 (NKFD) form a G4 region. K187 is modified (N6,N6,N6-trimethyllysine). Positions 194-196 (SGW) are G5. Residue K261 is modified to N6-methyllysine. N6,N6,N6-trimethyllysine occurs at positions 306 and 396.

It belongs to the TRAFAC class translation factor GTPase superfamily. Classic translation factor GTPase family. EF-Tu/EF-1A subfamily.

It is found in the cytoplasm. This protein promotes the GTP-dependent binding of aminoacyl-tRNA to the A-site of ribosomes during protein biosynthesis. In Euglena gracilis, this protein is Elongation factor 1-alpha (TEF).